Consider the following 339-residue polypeptide: Glyceraldehyde-3-phosphate dehydrogenase (339 aa).

Residues 11–12 and Gly110 contribute to the NAD(+) site; that span reads TI. 139-141 serves as a coordination point for D-glyceraldehyde 3-phosphate; that stretch reads SCN. Cys140 serves as the catalytic Nucleophile. Arg168 provides a ligand contact to NAD(+). 194 to 195 is a D-glyceraldehyde 3-phosphate binding site; that stretch reads HG. Gln301 is a binding site for NAD(+).

Belongs to the glyceraldehyde-3-phosphate dehydrogenase family. As to quaternary structure, homotetramer.

It localises to the cytoplasm. The catalysed reaction is D-glyceraldehyde 3-phosphate + phosphate + NADP(+) = (2R)-3-phospho-glyceroyl phosphate + NADPH + H(+). It catalyses the reaction D-glyceraldehyde 3-phosphate + phosphate + NAD(+) = (2R)-3-phospho-glyceroyl phosphate + NADH + H(+). It participates in carbohydrate degradation; glycolysis; pyruvate from D-glyceraldehyde 3-phosphate: step 1/5. This chain is Glyceraldehyde-3-phosphate dehydrogenase, found in Methanospirillum hungatei JF-1 (strain ATCC 27890 / DSM 864 / NBRC 100397 / JF-1).